The sequence spans 356 residues: MSLLSDLINLNLSESTEKIIAEYIWVGGSGMDLRSKARTLPGPVDDPAKLPKWNYDGSSTDQAPGDDSEVILYPQAIFKDPFRRGNNILVICDVYTPAGEPLPTNKRYDAAKIFSHPDVVAEVPWYGIEQEYTLLQKDVNWPLGWPLGGYPGPQGPYYCGVGADKAYGRDIVDAHYKACVYAGINISGINGEVMPGQWEFQVGPSVGISAGDEVWAARYILERITELAGAVVSFDPKPIPGDWNGAGAHSNYSTKSMREEGGYEVIKKAIEKLGLRHKEHIAAYGKGNERRLTGRHETADINTFSWGVANRGSSVRVGRDTEKQGKGYFEDRRPASNMDPYVVTSMIAETTILWKP.

The 81-residue stretch at Ile-19–Gly-99 folds into the GS beta-grasp domain. Residues Ala-37 to Asp-66 are disordered. The region spanning Lys-106–Pro-356 is the GS catalytic domain.

This sequence belongs to the glutamine synthetase family. Homooctamer. In terms of tissue distribution, roots.

It localises to the cytoplasm. It catalyses the reaction L-glutamate + NH4(+) + ATP = L-glutamine + ADP + phosphate + H(+). The protein is Glutamine synthetase PR-2 of Phaseolus vulgaris (Kidney bean).